The following is a 929-amino-acid chain: Isoleucine--tRNA ligase (929 aa).

Positions 58 to 68 match the 'HIGH' region motif; it reads PYANGDIHIGH. Position 563 (glutamate 563) interacts with L-isoleucyl-5'-AMP. Positions 605 to 609 match the 'KMSKS' region motif; it reads KMSKS. Residue lysine 608 coordinates ATP. 4 residues coordinate Zn(2+): cysteine 892, cysteine 895, cysteine 912, and cysteine 915.

Belongs to the class-I aminoacyl-tRNA synthetase family. IleS type 1 subfamily. In terms of assembly, monomer. Requires Zn(2+) as cofactor.

Its subcellular location is the cytoplasm. The enzyme catalyses tRNA(Ile) + L-isoleucine + ATP = L-isoleucyl-tRNA(Ile) + AMP + diphosphate. Catalyzes the attachment of isoleucine to tRNA(Ile). As IleRS can inadvertently accommodate and process structurally similar amino acids such as valine, to avoid such errors it has two additional distinct tRNA(Ile)-dependent editing activities. One activity is designated as 'pretransfer' editing and involves the hydrolysis of activated Val-AMP. The other activity is designated 'posttransfer' editing and involves deacylation of mischarged Val-tRNA(Ile). The protein is Isoleucine--tRNA ligase of Neisseria meningitidis serogroup C / serotype 2a (strain ATCC 700532 / DSM 15464 / FAM18).